The following is a 296-amino-acid chain: Hca operon transcriptional activator HcaR (296 aa).

Residues 1-58 enclose the HTH lysR-type domain; that stretch reads MELRHLRYFVAVAQALNFTRAAEKLHTSQPSLSSQIRDLENCVGVPLLVRDKRKVALT. The segment at residues 18 to 38 is a DNA-binding region (H-T-H motif); it reads FTRAAEKLHTSQPSLSSQIRD.

The protein belongs to the LysR transcriptional regulatory family.

Transcriptional activator of the hca operon for 3-phenylpropionic acid catabolism. This Escherichia coli (strain K12) protein is Hca operon transcriptional activator HcaR (hcaR).